A 132-amino-acid chain; its full sequence is Large ribosomal subunit protein eL8 (132 aa).

At Lys8 the chain carries N6-acetyllysine; alternate. A Glycyl lysine isopeptide (Lys-Gly) (interchain with G-Cter in SUMO2); alternate cross-link involves residue Lys8. Lys36 participates in a covalent cross-link: Glycyl lysine isopeptide (Lys-Gly) (interchain with G-Cter in SUMO2). Residue Lys128 is modified to N6-acetyllysine.

The protein belongs to the eukaryotic ribosomal protein eL8 family. Component of the large ribosomal subunit. Interacts with CRY1. Interacts with DICER1, AGO2, TARBP2, MOV10 and EIF6; they form a large RNA-induced silencing complex (RISC).

It is found in the cytoplasm. Its function is as follows. Component of the large ribosomal subunit. The ribosome is a large ribonucleoprotein complex responsible for the synthesis of proteins in the cell. The sequence is that of Large ribosomal subunit protein eL8 (RPL7A) from Sus scrofa (Pig).